Consider the following 554-residue polypeptide: 3-(3-hydroxy-phenyl)propionate/3-hydroxycinnamic acid hydroxylase (554 aa).

FAD-binding positions include 17–46 and 285–295; these read QVAI…VVEK and FRIDRVLLAGD.

This sequence belongs to the PheA/TfdB FAD monooxygenase family. FAD is required as a cofactor.

The enzyme catalyses 3-(3-hydroxyphenyl)propanoate + NADH + O2 + H(+) = 3-(2,3-dihydroxyphenyl)propanoate + NAD(+) + H2O. The catalysed reaction is (2E)-3-(3-hydroxyphenyl)prop-2-enoate + NADH + O2 + H(+) = (2E)-3-(2,3-dihydroxyphenyl)prop-2-enoate + NAD(+) + H2O. Its pathway is aromatic compound metabolism; 3-phenylpropanoate degradation. Catalyzes the insertion of one atom of molecular oxygen into position 2 of the phenyl ring of 3-(3-hydroxyphenyl)propionate (3-HPP) and hydroxycinnamic acid (3HCI). This is 3-(3-hydroxy-phenyl)propionate/3-hydroxycinnamic acid hydroxylase from Escherichia coli O8 (strain IAI1).